Consider the following 179-residue polypeptide: Small ribosomal subunit protein uS7 (179 aa).

It belongs to the universal ribosomal protein uS7 family. Part of the 30S ribosomal subunit. Contacts proteins S9 and S11.

In terms of biological role, one of the primary rRNA binding proteins, it binds directly to 16S rRNA where it nucleates assembly of the head domain of the 30S subunit. Is located at the subunit interface close to the decoding center, probably blocks exit of the E-site tRNA. The sequence is that of Small ribosomal subunit protein uS7 from Shigella flexneri serotype 5b (strain 8401).